We begin with the raw amino-acid sequence, 424 residues long: Piriformospora indica-insensitive protein 2 (424 aa).

The signal sequence occupies residues 1 to 21 (MLWQTFFSSLLLLSLLFGCNG). LRR repeat units follow at residues 141 to 166 (ASNLESLEFRSNPGLIGELPETIGNL), 167 to 190 (TKLKSLVVLENGFSGELPASICNL), 191 to 213 (KRLKRLVFAGNSFAGMIPNCFKG), 214 to 237 (LKELLILDLSRNSFSGTLPTSFGD), 238 to 263 (LVSLLKLDLSNNLLEGNLPQELGFLK), 265 to 286 (LTLLDLRNNRFSGGLSKNIENI), 287 to 311 (QSLTELVLSNNPMGEEDMVGTNWGK), 312 to 336 (MSNLVVLDLSKMGLRGEIPTSLTNL), 337 to 360 (KRLRFLGLNNNNLTGFVPSKKLEA), and 362 to 387 (PCLGALYINGNNLTGELRFSTKFYEK).

It localises to the cell membrane. Its function is as follows. Required for growth promotion and enhanced seed production mediated by the endophytic fungus Piriformospora indica. This chain is Piriformospora indica-insensitive protein 2 (PII-2), found in Arabidopsis thaliana (Mouse-ear cress).